Consider the following 637-residue polypeptide: 1-deoxy-D-xylulose-5-phosphate synthase (637 aa).

Residues His-71 and 112–114 contribute to the thiamine diphosphate site; that span reads SHA. Asp-144 provides a ligand contact to Mg(2+). Thiamine diphosphate-binding positions include 145-146, Asn-173, Tyr-284, and Glu-365; that span reads GA. Asn-173 is a Mg(2+) binding site.

It belongs to the transketolase family. DXPS subfamily. Homodimer. Mg(2+) is required as a cofactor. It depends on thiamine diphosphate as a cofactor.

The catalysed reaction is D-glyceraldehyde 3-phosphate + pyruvate + H(+) = 1-deoxy-D-xylulose 5-phosphate + CO2. It participates in metabolic intermediate biosynthesis; 1-deoxy-D-xylulose 5-phosphate biosynthesis; 1-deoxy-D-xylulose 5-phosphate from D-glyceraldehyde 3-phosphate and pyruvate: step 1/1. Functionally, catalyzes the acyloin condensation reaction between C atoms 2 and 3 of pyruvate and glyceraldehyde 3-phosphate to yield 1-deoxy-D-xylulose-5-phosphate (DXP). The protein is 1-deoxy-D-xylulose-5-phosphate synthase of Mycobacterium ulcerans (strain Agy99).